Reading from the N-terminus, the 250-residue chain is Pyrroloquinoline-quinone synthase (250 aa).

This sequence belongs to the PqqC family.

The catalysed reaction is 6-(2-amino-2-carboxyethyl)-7,8-dioxo-1,2,3,4,7,8-hexahydroquinoline-2,4-dicarboxylate + 3 O2 = pyrroloquinoline quinone + 2 H2O2 + 2 H2O + H(+). The protein operates within cofactor biosynthesis; pyrroloquinoline quinone biosynthesis. In terms of biological role, ring cyclization and eight-electron oxidation of 3a-(2-amino-2-carboxyethyl)-4,5-dioxo-4,5,6,7,8,9-hexahydroquinoline-7,9-dicarboxylic-acid to PQQ. This is Pyrroloquinoline-quinone synthase from Xanthomonas campestris pv. campestris (strain B100).